A 249-amino-acid polypeptide reads, in one-letter code: DNA repair protein RecO (249 aa).

This sequence belongs to the RecO family.

Involved in DNA repair and RecF pathway recombination. The polypeptide is DNA repair protein RecO (Afipia carboxidovorans (strain ATCC 49405 / DSM 1227 / KCTC 32145 / OM5) (Oligotropha carboxidovorans)).